The sequence spans 424 residues: L-glutamine:2-deoxy-scyllo-inosose aminotransferase (424 aa).

At lysine 202 the chain carries N6-(pyridoxal phosphate)lysine.

This sequence belongs to the DegT/DnrJ/EryC1 family. L-glutamine:2-deoxy-scyllo-inosose/scyllo-inosose aminotransferase subfamily. Pyridoxal 5'-phosphate is required as a cofactor.

It carries out the reaction 2-deoxy-L-scyllo-inosose + L-glutamine = 2-deoxy-scyllo-inosamine + 2-oxoglutaramate. The catalysed reaction is 3-amino-2,3-dideoxy-scyllo-inosose + L-glutamine = 2-deoxystreptamine + 2-oxoglutaramate. Its pathway is metabolic intermediate biosynthesis; 2-deoxystreptamine biosynthesis; 2-deoxystreptamine from D-glucose 6-phosphate: step 2/4. It participates in metabolic intermediate biosynthesis; 2-deoxystreptamine biosynthesis; 2-deoxystreptamine from D-glucose 6-phosphate: step 4/4. The protein operates within antibiotic biosynthesis; ribostamycin biosynthesis. Catalyzes the PLP-dependent transamination of 2-deoxy-scyllo-inosose (2-DOI) to form 2-deoxy-scyllo-inosamine (2-DOIA) using L-glutamine as the amino donor. Also catalyzes the transamination of 3-amino-2,3-dideoxy-scyllo-inosose (keto-2-DOIA) into 2-deoxystreptamine (2-DOS). This chain is L-glutamine:2-deoxy-scyllo-inosose aminotransferase (rbmB), found in Streptomyces ribosidificus.